A 95-amino-acid polypeptide reads, in one-letter code: Aspartyl/glutamyl-tRNA(Asn/Gln) amidotransferase subunit C (95 aa).

This sequence belongs to the GatC family. Heterotrimer of A, B and C subunits.

It catalyses the reaction L-glutamyl-tRNA(Gln) + L-glutamine + ATP + H2O = L-glutaminyl-tRNA(Gln) + L-glutamate + ADP + phosphate + H(+). The catalysed reaction is L-aspartyl-tRNA(Asn) + L-glutamine + ATP + H2O = L-asparaginyl-tRNA(Asn) + L-glutamate + ADP + phosphate + 2 H(+). Allows the formation of correctly charged Asn-tRNA(Asn) or Gln-tRNA(Gln) through the transamidation of misacylated Asp-tRNA(Asn) or Glu-tRNA(Gln) in organisms which lack either or both of asparaginyl-tRNA or glutaminyl-tRNA synthetases. The reaction takes place in the presence of glutamine and ATP through an activated phospho-Asp-tRNA(Asn) or phospho-Glu-tRNA(Gln). This Prochlorococcus marinus (strain NATL2A) protein is Aspartyl/glutamyl-tRNA(Asn/Gln) amidotransferase subunit C.